Here is a 253-residue protein sequence, read N- to C-terminus: Isoprenyl transferase (253 aa).

Aspartate 32 is a catalytic residue. Aspartate 32 contacts Mg(2+). Residues 33–36 (GNGR), tryptophan 37, arginine 45, histidine 49, and 77–79 (STE) each bind substrate. Asparagine 80 serves as the catalytic Proton acceptor. Residues tryptophan 81, arginine 83, arginine 200, and 206–208 (RLS) each bind substrate. Glutamate 219 contributes to the Mg(2+) binding site.

This sequence belongs to the UPP synthase family. In terms of assembly, homodimer. Mg(2+) is required as a cofactor.

Functionally, catalyzes the condensation of isopentenyl diphosphate (IPP) with allylic pyrophosphates generating different type of terpenoids. This chain is Isoprenyl transferase, found in Clostridium perfringens (strain 13 / Type A).